A 557-amino-acid chain; its full sequence is Dihydroxy-acid dehydratase (557 aa).

D78 contributes to the Mg(2+) binding site. C119 is a binding site for [2Fe-2S] cluster. D120 and K121 together coordinate Mg(2+). Residue K121 is modified to N6-carboxylysine. Residue C192 participates in [2Fe-2S] cluster binding. E442 is a Mg(2+) binding site. Residue S468 is the Proton acceptor of the active site.

It belongs to the IlvD/Edd family. Homodimer. It depends on [2Fe-2S] cluster as a cofactor. The cofactor is Mg(2+).

The catalysed reaction is (2R)-2,3-dihydroxy-3-methylbutanoate = 3-methyl-2-oxobutanoate + H2O. It carries out the reaction (2R,3R)-2,3-dihydroxy-3-methylpentanoate = (S)-3-methyl-2-oxopentanoate + H2O. It participates in amino-acid biosynthesis; L-isoleucine biosynthesis; L-isoleucine from 2-oxobutanoate: step 3/4. The protein operates within amino-acid biosynthesis; L-valine biosynthesis; L-valine from pyruvate: step 3/4. Functionally, functions in the biosynthesis of branched-chain amino acids. Catalyzes the dehydration of (2R,3R)-2,3-dihydroxy-3-methylpentanoate (2,3-dihydroxy-3-methylvalerate) into 2-oxo-3-methylpentanoate (2-oxo-3-methylvalerate) and of (2R)-2,3-dihydroxy-3-methylbutanoate (2,3-dihydroxyisovalerate) into 2-oxo-3-methylbutanoate (2-oxoisovalerate), the penultimate precursor to L-isoleucine and L-valine, respectively. This chain is Dihydroxy-acid dehydratase, found in Bacillus thuringiensis subsp. konkukian (strain 97-27).